Here is a 169-residue protein sequence, read N- to C-terminus: uncharacterized protein (169 aa).

A Phosphoserine modification is found at Ser-165.

This is an uncharacterized protein from Drosophila melanogaster (Fruit fly).